A 144-amino-acid chain; its full sequence is uncharacterized protein (144 aa).

Residues 1-23 form the signal peptide; sequence MVIPLRNKYGILFLIAVCIMVSG. The disordered stretch occupies residues 119 to 144; the sequence is QNGQRKTMTRIESKTGREEKDEKSKS. A compositionally biased stretch (basic and acidic residues) spans 127–144; sequence TRIESKTGREEKDEKSKS.

This is an uncharacterized protein from Bacillus subtilis (strain 168).